The following is a 272-amino-acid chain: Probable feruloyl esterase C (272 aa).

Positions 1 to 22 are cleaved as a signal peptide; sequence MLPTILYSAILALSALTPSALA.

It belongs to the faeC family.

The protein localises to the secreted. It catalyses the reaction feruloyl-polysaccharide + H2O = ferulate + polysaccharide.. Involved in degradation of plant cell walls. Hydrolyzes the feruloyl-arabinose ester bond in arabinoxylans, and the feruloyl-galactose ester bond in pectin. Active against paranitrophenyl-acetate, methyl ferulate and wheat arabinoxylan. The protein is Probable feruloyl esterase C (faeC-1) of Aspergillus clavatus (strain ATCC 1007 / CBS 513.65 / DSM 816 / NCTC 3887 / NRRL 1 / QM 1276 / 107).